We begin with the raw amino-acid sequence, 132 residues long: Ribonuclease P protein component (132 aa).

It belongs to the RnpA family. Consists of a catalytic RNA component (M1 or rnpB) and a protein subunit.

The enzyme catalyses Endonucleolytic cleavage of RNA, removing 5'-extranucleotides from tRNA precursor.. Functionally, RNaseP catalyzes the removal of the 5'-leader sequence from pre-tRNA to produce the mature 5'-terminus. It can also cleave other RNA substrates such as 4.5S RNA. The protein component plays an auxiliary but essential role in vivo by binding to the 5'-leader sequence and broadening the substrate specificity of the ribozyme. In Micrococcus luteus (strain ATCC 4698 / DSM 20030 / JCM 1464 / CCM 169 / CCUG 5858 / IAM 1056 / NBRC 3333 / NCIMB 9278 / NCTC 2665 / VKM Ac-2230) (Micrococcus lysodeikticus), this protein is Ribonuclease P protein component.